A 217-amino-acid polypeptide reads, in one-letter code: Cytidylate kinase (217 aa).

An ATP-binding site is contributed by 10 to 18 (GPAGAGKST).

It belongs to the cytidylate kinase family. Type 1 subfamily.

It localises to the cytoplasm. It carries out the reaction CMP + ATP = CDP + ADP. It catalyses the reaction dCMP + ATP = dCDP + ADP. The protein is Cytidylate kinase of Clostridium botulinum (strain ATCC 19397 / Type A).